The chain runs to 349 residues: MTFLKMKSLSFFFTILLSLSTLFTISNARKFNVGGSGAWVTNPPENYESWSGKNRFLVHDTLYFSYAKGADSVLEVNKADYDACNTKNPIKRVDDGDSEISLDRYGPFYFISGNEDNCKKGQKLNVVVISARIPSTAQSPHAAAPGSSTPGSMTPPGGAHSPKSSSPVSPTTSPPGSTTPPGGAHSPKSSSAVSPATSPPGSMAPKSGSPVSPTTSPPAPPKSTSPVSPSSAPMTSPPAPMAPKSSSTIPPSSAPMTSPPGSMAPKSSSPVSNSPTVSPSLAPGGSTSSSPSDSPSGSAMGPSGDGPSAAGDISTPAGAPGQKKSSANGMTVMSITTVLSLVLTIFLSA.

An N-terminal signal peptide occupies residues 1-28 (MTFLKMKSLSFFFTILLSLSTLFTISNA). The 102-residue stretch at 29–130 (RKFNVGGSGA…GQKLNVVVIS (102 aa)) folds into the Phytocyanin domain. Cysteines 84 and 118 form a disulfide. A disordered region spans residues 136–330 (TAQSPHAAAP…GQKKSSANGM (195 aa)). 2 stretches are compositionally biased toward low complexity: residues 145 to 201 (PGSS…SPPG) and 224 to 234 (TSPVSPSSAPM). The span at 249–260 (IPPSSAPMTSPP) shows a compositional bias: polar residues. Residues 263-312 (MAPKSSSPVSNSPTVSPSLAPGGSTSSSPSDSPSGSAMGPSGDGPSAAGD) show a composition bias toward low complexity. Ser-325 carries the GPI-anchor amidated serine lipid modification. Positions 326-349 (SANGMTVMSITTVLSLVLTIFLSA) are cleaved as a propeptide — removed in mature form.

It belongs to the early nodulin-like (ENODL) family. Mostly expressed in leaves and roots, and, to a lower extent, in seedlings, stems and flowers, but barely in seeds.

It is found in the cell membrane. In terms of biological role, may act as a carbohydrate transporter. The protein is Early nodulin-like protein 2 of Arabidopsis thaliana (Mouse-ear cress).